Consider the following 182-residue polypeptide: uncharacterized protein (182 aa).

This is an uncharacterized protein from Thermoproteus tenax (TTV1).